Reading from the N-terminus, the 318-residue chain is Beta-sarcoglycan (318 aa).

Residues 1-32 are disordered; sequence MAAAAAAAAEQQSSNGPVKKSMREKAVERRNV. Residues 1–65 lie on the Cytoplasmic side of the membrane; that stretch reads MAAAAAAAAE…GLRGRKGNLA (65 aa). The span at 21-32 shows a compositional bias: basic and acidic residues; it reads SMREKAVERRNV. A helical; Signal-anchor for type II membrane protein transmembrane segment spans residues 66 to 86; that stretch reads ICVIVLLFLLAVINLIITLVI. Over 87–318 the chain is Extracellular; the sequence is WAVIRIGPNG…VSDNPCGNTH (232 aa). N158, N211, and N258 each carry an N-linked (GlcNAc...) asparagine glycan. 2 disulfides stabilise this stretch: C288–C314 and C290–C307.

Belongs to the sarcoglycan beta/delta/gamma/zeta family. Cross-link to form 2 major subcomplexes: one consisting of SGCB, SGCD and SGCG and the other consisting of SGCB and SGCD. The association between SGCB and SGCG is particularly strong while SGCA is loosely associated with the other sarcoglycans. In terms of processing, disulfide bonds are present.

The protein localises to the cell membrane. It localises to the sarcolemma. It is found in the cytoplasm. Its subcellular location is the cytoskeleton. Component of the sarcoglycan complex, a subcomplex of the dystrophin-glycoprotein complex which forms a link between the F-actin cytoskeleton and the extracellular matrix. The protein is Beta-sarcoglycan (SGCB) of Oryctolagus cuniculus (Rabbit).